Reading from the N-terminus, the 708-residue chain is Potassium-transporting ATPase ATP-binding subunit 2 (708 aa).

Residues methionine 1–methionine 23 are disordered. A compositionally biased stretch (basic and acidic residues) spans leucine 7–methionine 23. Transmembrane regions (helical) follow at residues methionine 49–phenylalanine 69, glycine 84–alanine 104, isoleucine 235–methionine 255, and serine 283–leucine 303. Aspartate 339 serves as the catalytic 4-aspartylphosphate intermediate. Residues aspartate 376, glutamate 380, phenylalanine 407–serine 414, and lysine 426 each bind ATP. Mg(2+) is bound by residues aspartate 549 and aspartate 553. The next 3 helical transmembrane spans lie at phenylalanine 619–leucine 639, alanine 645–leucine 665, and isoleucine 683–valine 703.

Belongs to the cation transport ATPase (P-type) (TC 3.A.3) family. Type IA subfamily. In terms of assembly, the system is composed of three essential subunits: KdpA, KdpB and KdpC.

It localises to the cell inner membrane. The enzyme catalyses K(+)(out) + ATP + H2O = K(+)(in) + ADP + phosphate + H(+). In terms of biological role, part of the high-affinity ATP-driven potassium transport (or Kdp) system, which catalyzes the hydrolysis of ATP coupled with the electrogenic transport of potassium into the cytoplasm. This subunit is responsible for energy coupling to the transport system and for the release of the potassium ions to the cytoplasm. The protein is Potassium-transporting ATPase ATP-binding subunit 2 of Nostoc sp. (strain PCC 7120 / SAG 25.82 / UTEX 2576).